Here is a 92-residue protein sequence, read N- to C-terminus: Small ribosomal subunit protein uS19 (92 aa).

It belongs to the universal ribosomal protein uS19 family.

In terms of biological role, protein S19 forms a complex with S13 that binds strongly to the 16S ribosomal RNA. In Lactococcus lactis subsp. lactis (strain IL1403) (Streptococcus lactis), this protein is Small ribosomal subunit protein uS19.